Consider the following 603-residue polypeptide: Cdc42-interacting protein 4 (603 aa).

The required for podosome formation and interaction with AKAP9 and microtubules stretch occupies residues methionine 1–phenylalanine 117. Positions methionine 1–phenylalanine 117 are required for translocation to the plasma membrane in response to insulin. One can recognise an F-BAR domain in the interval methionine 1–aspartate 264. Positions phenylalanine 67–valine 259 form a coiled coil. Residues arginine 293 to glutamate 539 are interaction with CDC42. The interval arginine 293–asparagine 603 is interaction with PDE6G. Positions proline 295–proline 358 are disordered. Serine 296, serine 298, and serine 299 each carry phosphoserine. Over residues serine 316–proline 329 the composition is skewed to basic residues. The segment covering serine 333–serine 346 has biased composition (low complexity). Residues serine 335 and serine 351 each carry the phosphoserine modification. Residues threonine 388–aspartate 481 are a coiled coil. In terms of domain architecture, REM-1 spans histidine 393 to glutamate 470. Residues alanine 471–asparagine 603 are required for interaction with FASLG and localization to lysosomes. The interval serine 477–alanine 541 is disordered. Position 482 is a phosphoserine (serine 482). The tract at residues alanine 487 to proline 543 is interaction with DNM2 and WASL. Residues proline 497–glutamine 510 show a composition bias toward low complexity. Positions glutamate 532–asparagine 603 are interaction with DNM1 and WASL. A required for podosome formation region spans residues proline 540–asparagine 603. Residues serine 542–asparagine 603 enclose the SH3 domain. The interaction with WAS stretch occupies residues glutamine 546–asparagine 603. The interval valine 548–asparagine 603 is interaction with ARHGAP17, DAAM1, DIAPH1 and DIAPH2.

It belongs to the FNBP1 family. In terms of assembly, homodimerizes, the dimers can polymerize end-to-end to form filamentous structures. Interacts with AKAP9, ARHGAP17, DAAM1, DIAPH1, DIAPH2, DNM1, FASLG/FASL, GAPVD1, LYN, microtubules, PDE6G, SRC and WAS/WASP. Interacts with the ligand binding domain of the thyroid receptor (TR) in the presence of thyroid hormone. May interact with CTNNB1 and HD/HTT. Interacts specifically with GTP-bound CDC42 and RHOQ. Interacts with DNM2 and WASL. Post-translationally, tyrosine phosphorylated. Also phosphorylated by PKA.

The protein resides in the cytoplasm. The protein localises to the cytoskeleton. Its subcellular location is the cell cortex. It is found in the lysosome. It localises to the golgi apparatus. The protein resides in the cell membrane. The protein localises to the cell projection. Its subcellular location is the phagocytic cup. Required to coordinate membrane tubulation with reorganization of the actin cytoskeleton during endocytosis. Binds to lipids such as phosphatidylinositol 4,5-bisphosphate and phosphatidylserine and promotes membrane invagination and the formation of tubules. Also promotes CDC42-induced actin polymerization by recruiting WASL/N-WASP which in turn activates the Arp2/3 complex. Actin polymerization may promote the fission of membrane tubules to form endocytic vesicles. Required for the formation of podosomes, actin-rich adhesion structures specific to monocyte-derived cells. May be required for the lysosomal retention of FASLG/FASL. Required for translocation of GLUT4 to the plasma membrane in response to insulin signaling. This is Cdc42-interacting protein 4 (Trip10) from Mus musculus (Mouse).